Here is a 306-residue protein sequence, read N- to C-terminus: Homoserine kinase (306 aa).

88-98 (PLARGLGSSAT) serves as a coordination point for ATP.

The protein belongs to the GHMP kinase family. Homoserine kinase subfamily.

The protein localises to the cytoplasm. It carries out the reaction L-homoserine + ATP = O-phospho-L-homoserine + ADP + H(+). The protein operates within amino-acid biosynthesis; L-threonine biosynthesis; L-threonine from L-aspartate: step 4/5. Functionally, catalyzes the ATP-dependent phosphorylation of L-homoserine to L-homoserine phosphate. In Synechococcus sp. (strain ATCC 27144 / PCC 6301 / SAUG 1402/1) (Anacystis nidulans), this protein is Homoserine kinase.